The chain runs to 385 residues: Putative transporter YthQ (385 aa).

Helical transmembrane passes span 24-44 (AVID…FVIY), 67-87 (WLYA…FLME), 106-128 (YALL…IVLP), 133-155 (SVLI…HIFF), 176-193 (TLVR…IVFT), 197-214 (LLAL…IRSL), 304-324 (AFTV…LLVY), and 365-385 (ILHY…LLFT).

It localises to the cell membrane. This chain is Putative transporter YthQ (ythQ), found in Bacillus subtilis (strain 168).